Consider the following 333-residue polypeptide: Glycerol-3-phosphate dehydrogenase [NAD(P)+] (333 aa).

NADPH-binding residues include Trp-11, Arg-30, and Lys-105. Sn-glycerol 3-phosphate is bound by residues Lys-105, Gly-133, and Ser-135. Position 137 (Ala-137) interacts with NADPH. Lys-188, Asp-241, Ser-251, Arg-252, and Asn-253 together coordinate sn-glycerol 3-phosphate. The Proton acceptor role is filled by Lys-188. Arg-252 is an NADPH binding site. NADPH is bound by residues Val-276 and Glu-278.

The protein belongs to the NAD-dependent glycerol-3-phosphate dehydrogenase family.

The protein resides in the cytoplasm. The catalysed reaction is sn-glycerol 3-phosphate + NAD(+) = dihydroxyacetone phosphate + NADH + H(+). It carries out the reaction sn-glycerol 3-phosphate + NADP(+) = dihydroxyacetone phosphate + NADPH + H(+). It functions in the pathway membrane lipid metabolism; glycerophospholipid metabolism. Functionally, catalyzes the reduction of the glycolytic intermediate dihydroxyacetone phosphate (DHAP) to sn-glycerol 3-phosphate (G3P), the key precursor for phospholipid synthesis. This is Glycerol-3-phosphate dehydrogenase [NAD(P)+] from Methylibium petroleiphilum (strain ATCC BAA-1232 / LMG 22953 / PM1).